Here is a 77-residue protein sequence, read N- to C-terminus: MKEQKWIHEGLITESLPNGMFRVRLDNEDLILGYVSGKIRRSFIRILPGDRVKIEVSRYDSSRGRIIYRLRNKDSND.

Positions Met-1–Arg-71 constitute an S1-like domain.

It belongs to the IF-1 family. As to quaternary structure, component of the 30S ribosomal translation pre-initiation complex which assembles on the 30S ribosome in the order IF-2 and IF-3, IF-1 and N-formylmethionyl-tRNA(fMet); mRNA recruitment can occur at any time during PIC assembly.

It localises to the plastid. The protein resides in the chloroplast. In terms of biological role, one of the essential components for the initiation of protein synthesis. Stabilizes the binding of IF-2 and IF-3 on the 30S subunit to which N-formylmethionyl-tRNA(fMet) subsequently binds. Helps modulate mRNA selection, yielding the 30S pre-initiation complex (PIC). Upon addition of the 50S ribosomal subunit IF-1, IF-2 and IF-3 are released leaving the mature 70S translation initiation complex. This chain is Translation initiation factor IF-1, chloroplastic, found in Buxus microphylla (Littleleaf boxwood).